Here is a 585-residue protein sequence, read N- to C-terminus: Regulator of gene activity (585 aa).

Residues phenylalanine 42–tyrosine 56 show a composition bias toward polar residues. 3 disordered regions span residues phenylalanine 42–asparagine 93, glycine 148–lysine 191, and glycine 349–asparagine 394. The segment covering glutamine 58–glutamine 71 has biased composition (low complexity). A compositionally biased stretch (polar residues) spans proline 166 to proline 184. Gly residues predominate over residues glycine 349–glycine 367. Polar residues predominate over residues aspartate 372 to proline 388.

It belongs to the CNOT2/3/5 family. Component of the CCR4-NOT complex composed of at least Pop2/Caf1-55, Ccr4, Not1, Rga/Not2, and Not3. As to expression, expressed in heterogeneous levels between adjacent germline stem cells (at protein level).

The protein localises to the cytoplasm. Functionally, component of the CCR4-NOT complex which is one of the major cellular mRNA deadenylases and is linked to various cellular processes including bulk mRNA degradation, miRNA-mediated repression, translational repression during translational initiation and general transcription regulation. Additional complex functions may be a consequence of its influence on mRNA expression. Essential for viability. Acts as a suppressor of position effect variegation (PEV) at the white locus and regulates the expression of several unrelated genes. Plays a role in germline stem cell differentiation in the ovaries. The protein is Regulator of gene activity of Drosophila melanogaster (Fruit fly).